Reading from the N-terminus, the 124-residue chain is MARLMGVDLPRDKRMEIALTYIYGVGRTRSQEILEATGISRDQRTKDLTDDQVSQLRDYIEGNLKVEGDLRREVQADIRRKIEIGCYQGLRHRRGLPVRGQRTKTNARTRKGPKRTIAGKKKAR.

A disordered region spans residues 97-124; it reads PVRGQRTKTNARTRKGPKRTIAGKKKAR.

It belongs to the universal ribosomal protein uS13 family. As to quaternary structure, part of the 30S ribosomal subunit. Forms a loose heterodimer with protein S19. Forms two bridges to the 50S subunit in the 70S ribosome.

Functionally, located at the top of the head of the 30S subunit, it contacts several helices of the 16S rRNA. In the 70S ribosome it contacts the 23S rRNA (bridge B1a) and protein L5 of the 50S subunit (bridge B1b), connecting the 2 subunits; these bridges are implicated in subunit movement. Contacts the tRNAs in the A and P-sites. This chain is Small ribosomal subunit protein uS13, found in Mycolicibacterium gilvum (strain PYR-GCK) (Mycobacterium gilvum (strain PYR-GCK)).